The following is a 144-amino-acid chain: L-fucose mutarotase (144 aa).

His-22 serves as the catalytic Proton donor. Substrate is bound by residues Asp-30, Arg-109, and 131-133 (YGN).

Belongs to the RbsD / FucU family. FucU mutarotase subfamily. In terms of assembly, homodecamer.

The protein localises to the cytoplasm. It carries out the reaction alpha-L-fucose = beta-L-fucose. It participates in carbohydrate metabolism; L-fucose metabolism. Functionally, involved in the anomeric conversion of L-fucose. The polypeptide is L-fucose mutarotase (Actinobacillus pleuropneumoniae serotype 5b (strain L20)).